A 378-amino-acid polypeptide reads, in one-letter code: Non-functional pseudokinase ZRK6 (378 aa).

In terms of domain architecture, Protein kinase spans 34-378 (DGKCNPIKNF…SNNRSQMSSI (345 aa)). ATP-binding positions include 40-48 (IKNFSYDQI) and Lys83.

This sequence belongs to the protein kinase superfamily. Ser/Thr protein kinase family. ZRK subfamily. Interacts with RPP13L4/ZAR1.

This Arabidopsis thaliana (Mouse-ear cress) protein is Non-functional pseudokinase ZRK6.